We begin with the raw amino-acid sequence, 285 residues long: HTH-type transcriptional activator AmpR (285 aa).

An HTH lysR-type domain is found at 5–62 (LPLNALRAFEASARHLSFTRAALELCVTQAAVSQQVRILEDRLNRVLFKRLPRGLEMT). A DNA-binding region (H-T-H motif) is located at residues 22 to 41 (FTRAALELCVTQAAVSQQVR).

This sequence belongs to the LysR transcriptional regulatory family.

It is found in the cytoplasm. Functionally, this protein is a positive regulator of gene expression of beta-lactamase (AmpC). The protein is HTH-type transcriptional activator AmpR (ampR) of Citrobacter koseri (Citrobacter diversus).